The chain runs to 341 residues: tRNA N6-adenosine threonylcarbamoyltransferase (341 aa).

Residues His111 and His115 each contribute to the Fe cation site. Residues 134–138, Asp167, Gly180, and Asn276 contribute to the substrate site; that span reads LVSGG. Asp304 serves as a coordination point for Fe cation.

The protein belongs to the KAE1 / TsaD family. The cofactor is Fe(2+).

The protein localises to the cytoplasm. It carries out the reaction L-threonylcarbamoyladenylate + adenosine(37) in tRNA = N(6)-L-threonylcarbamoyladenosine(37) in tRNA + AMP + H(+). Required for the formation of a threonylcarbamoyl group on adenosine at position 37 (t(6)A37) in tRNAs that read codons beginning with adenine. Is involved in the transfer of the threonylcarbamoyl moiety of threonylcarbamoyl-AMP (TC-AMP) to the N6 group of A37, together with TsaE and TsaB. TsaD likely plays a direct catalytic role in this reaction. This Pseudomonas aeruginosa (strain ATCC 15692 / DSM 22644 / CIP 104116 / JCM 14847 / LMG 12228 / 1C / PRS 101 / PAO1) protein is tRNA N6-adenosine threonylcarbamoyltransferase.